Consider the following 255-residue polypeptide: Acetylglutamate kinase (255 aa).

Substrate contacts are provided by residues 40 to 41, Arg-62, and Asn-153; that span reads GG.

The protein belongs to the acetylglutamate kinase family. ArgB subfamily.

It is found in the cytoplasm. The enzyme catalyses N-acetyl-L-glutamate + ATP = N-acetyl-L-glutamyl 5-phosphate + ADP. It functions in the pathway amino-acid biosynthesis; L-arginine biosynthesis; N(2)-acetyl-L-ornithine from L-glutamate: step 2/4. Catalyzes the ATP-dependent phosphorylation of N-acetyl-L-glutamate. The sequence is that of Acetylglutamate kinase from Bacillus cereus (strain ZK / E33L).